Here is a 277-residue protein sequence, read N- to C-terminus: 3-methyl-2-oxobutanoate hydroxymethyltransferase (277 aa).

The Mg(2+) site is built by aspartate 43 and aspartate 82. 3-methyl-2-oxobutanoate-binding positions include 43-44, aspartate 82, and lysine 112; that span reads DS. Position 114 (glutamate 114) interacts with Mg(2+). Glutamate 181 serves as the catalytic Proton acceptor.

It belongs to the PanB family. As to quaternary structure, homodecamer; pentamer of dimers. Mg(2+) is required as a cofactor.

It is found in the cytoplasm. It carries out the reaction 3-methyl-2-oxobutanoate + (6R)-5,10-methylene-5,6,7,8-tetrahydrofolate + H2O = 2-dehydropantoate + (6S)-5,6,7,8-tetrahydrofolate. It functions in the pathway cofactor biosynthesis; (R)-pantothenate biosynthesis; (R)-pantoate from 3-methyl-2-oxobutanoate: step 1/2. Functionally, catalyzes the reversible reaction in which hydroxymethyl group from 5,10-methylenetetrahydrofolate is transferred onto alpha-ketoisovalerate to form ketopantoate. The polypeptide is 3-methyl-2-oxobutanoate hydroxymethyltransferase (Listeria monocytogenes serovar 1/2a (strain ATCC BAA-679 / EGD-e)).